Consider the following 147-residue polypeptide: Transcription antitermination protein NusB (147 aa).

The protein belongs to the NusB family.

Functionally, involved in transcription antitermination. Required for transcription of ribosomal RNA (rRNA) genes. Binds specifically to the boxA antiterminator sequence of the ribosomal RNA (rrn) operons. In Legionella pneumophila (strain Paris), this protein is Transcription antitermination protein NusB.